A 631-amino-acid chain; its full sequence is 1-deoxy-D-xylulose-5-phosphate synthase (631 aa).

Thiamine diphosphate contacts are provided by residues histidine 87 and 128–130; that span reads GHS. Aspartate 159 provides a ligand contact to Mg(2+). Residues 160-161, asparagine 188, phenylalanine 295, and glutamate 378 each bind thiamine diphosphate; that span reads GA. Asparagine 188 contributes to the Mg(2+) binding site.

Belongs to the transketolase family. DXPS subfamily. In terms of assembly, homodimer. Mg(2+) serves as cofactor. Requires thiamine diphosphate as cofactor.

The catalysed reaction is D-glyceraldehyde 3-phosphate + pyruvate + H(+) = 1-deoxy-D-xylulose 5-phosphate + CO2. It participates in metabolic intermediate biosynthesis; 1-deoxy-D-xylulose 5-phosphate biosynthesis; 1-deoxy-D-xylulose 5-phosphate from D-glyceraldehyde 3-phosphate and pyruvate: step 1/1. In terms of biological role, catalyzes the acyloin condensation reaction between C atoms 2 and 3 of pyruvate and glyceraldehyde 3-phosphate to yield 1-deoxy-D-xylulose-5-phosphate (DXP). The chain is 1-deoxy-D-xylulose-5-phosphate synthase from Pseudomonas syringae pv. tomato (strain ATCC BAA-871 / DC3000).